A 134-amino-acid chain; its full sequence is Small ribosomal subunit protein uS11 (134 aa).

This sequence belongs to the universal ribosomal protein uS11 family. In terms of assembly, part of the 30S ribosomal subunit. Interacts with proteins S7 and S18. Binds to IF-3.

Its function is as follows. Located on the platform of the 30S subunit, it bridges several disparate RNA helices of the 16S rRNA. Forms part of the Shine-Dalgarno cleft in the 70S ribosome. The protein is Small ribosomal subunit protein uS11 of Herminiimonas arsenicoxydans.